We begin with the raw amino-acid sequence, 233 residues long: Esterase FUS5 (233 aa).

Active-site charge relay system residues include Ser105, Asp159, and His187.

Belongs to the LovG family.

Its function is as follows. Esterase; part of the gene cluster that mediates the biosynthesis of the mycotoxin fusarin C. Within the cluster, FUS1, FUS2, FUS8 and FUS9 are sufficient for fusarin production. The other FUS cluster members are not essential for fusarin C biosynthesis. The chain is Esterase FUS5 from Gibberella moniliformis (strain M3125 / FGSC 7600) (Maize ear and stalk rot fungus).